A 369-amino-acid chain; its full sequence is S-(hydroxymethyl)glutathione dehydrogenase (369 aa).

Cys-40, His-62, Cys-92, Cys-95, Cys-98, Cys-106, and Cys-169 together coordinate Zn(2+).

This sequence belongs to the zinc-containing alcohol dehydrogenase family. Class-III subfamily. Homodimer. Requires Zn(2+) as cofactor.

Its subcellular location is the cytoplasm. The enzyme catalyses S-(hydroxymethyl)glutathione + NADP(+) = S-formylglutathione + NADPH + H(+). The catalysed reaction is S-(hydroxymethyl)glutathione + NAD(+) = S-formylglutathione + NADH + H(+). It catalyses the reaction a primary alcohol + NAD(+) = an aldehyde + NADH + H(+). It carries out the reaction a secondary alcohol + NAD(+) = a ketone + NADH + H(+). The enzyme catalyses S-nitrosoglutathione + NADH + H(+) = S-(hydroxysulfenamide)glutathione + NAD(+). Functionally, has high formaldehyde dehydrogenase activity in the presence of glutathione and catalyzes the oxidation of normal alcohols in a reaction that is not GSH-dependent. In addition, hemithiolacetals other than those formed from GSH, including omega-thiol fatty acids, also are substrates. Also acts as a S-nitroso-glutathione reductase by catalyzing the NADH-dependent reduction of S-nitrosoglutathione. This Photobacterium damsela subsp. piscicida (Pasteurella piscicida) protein is S-(hydroxymethyl)glutathione dehydrogenase (frmA).